An 83-amino-acid polypeptide reads, in one-letter code: MSEFWLCFNCCIAEQPQPRRRRIDRSMIGEPTNFVHTAHVGSGDLFSGMNSVSSIQNQMQSKGGYGGGMPANVQMQLVDTKAG.

2 S-palmitoyl cysteine lipidation sites follow: cysteine 10 and cysteine 11. Residues 28 to 41 enclose the CRIB domain; the sequence is IGEPTNFVHTAHVG. Phosphoserine is present on residues serine 42 and serine 51.

This sequence belongs to the CDC42SE/SPEC family. In terms of assembly, interacts with CDC42 (in GTP-bound form). Interacts weakly with RAC1 and not at all with RHOA.

It localises to the cytoplasm. The protein localises to the cytoskeleton. It is found in the cell membrane. The protein resides in the cell projection. Its subcellular location is the phagocytic cup. Its function is as follows. Probably involved in the organization of the actin cytoskeleton by acting downstream of CDC42, inducing actin filament assembly. Alters CDC42-induced cell shape changes. In activated T-cells, may play a role in CDC42-mediated F-actin accumulation at the immunological synapse. May play a role in early contractile events in phagocytosis in macrophages. This Rattus norvegicus (Rat) protein is CDC42 small effector protein 2 (Cdc42se2).